The sequence spans 62 residues: Large ribosomal subunit protein bL28 (62 aa).

This sequence belongs to the bacterial ribosomal protein bL28 family.

The polypeptide is Large ribosomal subunit protein bL28 (Aster yellows witches'-broom phytoplasma (strain AYWB)).